The primary structure comprises 583 residues: MATANALSSPSVLCSSRQGKLSGGSQQKGQRVSYRKANRRFSLRANVKEIAFDQSSRAALQAGIDKLADAVGLTLGPRGRNVVLDEFGSPKVVNDGVTIARAIELPDAMENAGAALIREVASKTNDSAGDGTTTASVLAREIIKHGLLSVTSGANPVSLKRGIDKTVQALIEELEKRSRPVKGGRDIKAVATISAGNDELIGAMIADAIDKVGPDGVSPIESSSSFETTVEVEEGMEIDRGYISPQFVTNPEKLLVEFENARVLITDQKITAIKDIIPILEKTTQLRAPLLIIAEDVTGEALATLVVNKLRGVLNVVAVKAPGFGERRKAMLQDIAILTEPSTALDMGLLVENTTIDQLGIARKVTISKDSTTLIADAASKAELQARISQLKKESFETDSVYDSEKLAERIAKLSGGVAVIKVGAATETELEDRKLRIEDAKNATFAAIEEGIVPGGGATLVHLSTVIPAIKETFEDADVRLGADIVQKALVAQSLIAQNAGIEGEVVVEKIMFSEWELGYNAMTDTYENLLEAGVIDPAKVTRCALQNAASVAGMVLTTQAIVVDKPKPKAPAAAAPEGLMV.

The span at 1 to 14 shows a compositional bias: polar residues; that stretch reads MATANALSSPSVLC. Residues 1–35 form a disordered region; the sequence is MATANALSSPSVLCSSRQGKLSGGSQQKGQRVSYR. Residues 1-45 constitute a chloroplast transit peptide; sequence MATANALSSPSVLCSSRQGKLSGGSQQKGQRVSYRKANRRFSLRA. Positions 15–31 are enriched in low complexity; sequence SSRQGKLSGGSQQKGQR. A Phosphoserine modification is found at serine 89.

The protein belongs to the chaperonin (HSP60) family. In terms of assembly, oligomer of probably six alpha and six beta subunits.

The protein localises to the plastid. The protein resides in the chloroplast. This protein binds RuBisCO small and large subunits and is implicated in the assembly of the enzyme oligomer. This is RuBisCO large subunit-binding protein subunit alpha, chloroplastic from Brassica napus (Rape).